The chain runs to 369 residues: Anhydro-N-acetylmuramic acid kinase (369 aa).

An ATP-binding site is contributed by G12 to D19.

It belongs to the anhydro-N-acetylmuramic acid kinase family.

The enzyme catalyses 1,6-anhydro-N-acetyl-beta-muramate + ATP + H2O = N-acetyl-D-muramate 6-phosphate + ADP + H(+). The protein operates within amino-sugar metabolism; 1,6-anhydro-N-acetylmuramate degradation. It participates in cell wall biogenesis; peptidoglycan recycling. In terms of biological role, catalyzes the specific phosphorylation of 1,6-anhydro-N-acetylmuramic acid (anhMurNAc) with the simultaneous cleavage of the 1,6-anhydro ring, generating MurNAc-6-P. Is required for the utilization of anhMurNAc either imported from the medium or derived from its own cell wall murein, and thus plays a role in cell wall recycling. The sequence is that of Anhydro-N-acetylmuramic acid kinase from Escherichia coli O7:K1 (strain IAI39 / ExPEC).